The primary structure comprises 204 residues: AFG2-interacting ribosome maturation factor (204 aa).

Part of the 55LCC heterohexameric ATPase complex. Does not associate with pre-60S ribosomal particles.

It localises to the nucleus. The protein localises to the cytoplasm. Its function is as follows. Part of the 55LCC heterohexameric ATPase complex which is chromatin-associated and promotes replisome proteostasis to maintain replication fork progression and genome stability. Required for replication fork progression, sister chromatid cohesion, and chromosome stability. The ATPase activity is specifically enhanced by replication fork DNA and is coupled to cysteine protease-dependent cleavage of replisome substrates in response to replication fork damage. Uses ATPase activity to process replisome substrates in S-phase, facilitating their proteolytic turnover from chromatin to ensure DNA replication and mitotic fidelity. Involved in the cytoplasmic maturation steps of pre-60S ribosomal particles by promoting the release of shuttling protein RSL24D1/RLP24 from the pre-ribosomal particles. This is AFG2-interacting ribosome maturation factor (airim) from Xenopus tropicalis (Western clawed frog).